The chain runs to 698 residues: Elongation factor G 1 (698 aa).

Positions 8 to 290 constitute a tr-type G domain; sequence ERYRNIGICA…AVIEFLPAPV (283 aa). GTP contacts are provided by residues 17-24, 88-92, and 142-145; these read AHVDAGKT, DTPGH, and NKMD.

It belongs to the TRAFAC class translation factor GTPase superfamily. Classic translation factor GTPase family. EF-G/EF-2 subfamily.

The protein resides in the cytoplasm. Its function is as follows. Catalyzes the GTP-dependent ribosomal translocation step during translation elongation. During this step, the ribosome changes from the pre-translocational (PRE) to the post-translocational (POST) state as the newly formed A-site-bound peptidyl-tRNA and P-site-bound deacylated tRNA move to the P and E sites, respectively. Catalyzes the coordinated movement of the two tRNA molecules, the mRNA and conformational changes in the ribosome. The sequence is that of Elongation factor G 1 from Aliivibrio fischeri (strain ATCC 700601 / ES114) (Vibrio fischeri).